A 368-amino-acid chain; its full sequence is MSAFQPTIKRRESTKIYVGNVPIGGDAPIAVQSMTNTRTTDVEATVAQIKSLERVGADIVRVSVPTMDAAEAFKQIKQQVNVPLVADIHFDYRIALKVAEYGVDCLRINPGNIGREDRVRAVVDCARDKNIPIRIGVNAGSLEKDLQEKYGEPTPEALLESALRHVEILDRLNFDQFKVSVKASDVFLAVESYRLLAKAIKQPLHLGITEAGGARAGAVKSAVGLGMLLAEGIGDTLRVSLAADPVEEIKVGFDILKSLRIRSRGINFIACPTCSRQEFDVIGTVNALEQRLEDIITPMDVSIIGCVVNGPGEALVSDLGVTGGNKKSGYYLDGERQKERFDNEDIVNQLEAKIRAKVARQDPKNRII.

4 residues coordinate [4Fe-4S] cluster: cysteine 271, cysteine 274, cysteine 306, and glutamate 313.

Belongs to the IspG family. Requires [4Fe-4S] cluster as cofactor.

The enzyme catalyses (2E)-4-hydroxy-3-methylbut-2-enyl diphosphate + oxidized [flavodoxin] + H2O + 2 H(+) = 2-C-methyl-D-erythritol 2,4-cyclic diphosphate + reduced [flavodoxin]. It participates in isoprenoid biosynthesis; isopentenyl diphosphate biosynthesis via DXP pathway; isopentenyl diphosphate from 1-deoxy-D-xylulose 5-phosphate: step 5/6. In terms of biological role, converts 2C-methyl-D-erythritol 2,4-cyclodiphosphate (ME-2,4cPP) into 1-hydroxy-2-methyl-2-(E)-butenyl 4-diphosphate. The polypeptide is 4-hydroxy-3-methylbut-2-en-1-yl diphosphate synthase (flavodoxin) (Haemophilus influenzae (strain ATCC 51907 / DSM 11121 / KW20 / Rd)).